The chain runs to 385 residues: Chaperone protein DnaJ (385 aa).

The J domain occupies 5 to 70 (DFYDVLGVSR…QSRAAYDQFG (66 aa)). The CR-type zinc-finger motif lies at 143–221 (GKKAQVRVPG…CHGAGRVEKE (79 aa)). The Zn(2+) site is built by Cys156, Cys159, Cys173, Cys176, Cys195, Cys198, Cys209, and Cys212. 4 CXXCXGXG motif repeats span residues 156–163 (CEVCTGTG), 173–180 (CPTCQGHG), 195–202 (CPTCHGRG), and 209–216 (CTNCHGAG).

It belongs to the DnaJ family. Homodimer. Zn(2+) serves as cofactor.

It localises to the cytoplasm. Participates actively in the response to hyperosmotic and heat shock by preventing the aggregation of stress-denatured proteins and by disaggregating proteins, also in an autonomous, DnaK-independent fashion. Unfolded proteins bind initially to DnaJ; upon interaction with the DnaJ-bound protein, DnaK hydrolyzes its bound ATP, resulting in the formation of a stable complex. GrpE releases ADP from DnaK; ATP binding to DnaK triggers the release of the substrate protein, thus completing the reaction cycle. Several rounds of ATP-dependent interactions between DnaJ, DnaK and GrpE are required for fully efficient folding. Also involved, together with DnaK and GrpE, in the DNA replication of plasmids through activation of initiation proteins. This is Chaperone protein DnaJ from Parvibaculum lavamentivorans (strain DS-1 / DSM 13023 / NCIMB 13966).